The sequence spans 431 residues: MVSALEVKSIKDSNETLISLDDYIRNTLPSQLHEILLEEFQNQDFSRGQDVSNSTHDQMIDHTLELTSDLLRNALDKQLMEVQSRTLPVRQSNQLISWSFAQGLIIGQLSVVIFLIFFVKFFIFTDASSKMDNPLPSKVSKSYLKNRRESSSIKDKRKGVLVKEESGETDLHGSLQLNDILEKTYYNVDTHSAESLDWFNVLLAQMIQQFREEAWHKDNILTSLDSFIQKRSSDLPDYLDKITITELDIGEDFPIFSNCRIQYAPNSSDKKLEAKIDIDLNDKITFGMSTRLLLNYPKKCTAALPIDLAVSMVRFQACLTVSLITAEELEFTTGNKIDDNEKNGYYLVFSFTPEYKIDFDIKSLIGARSKLENIPKISNIIEYNIKKWFAERCVEPRFQSVKLPGMWPRSKNTREEVIHKTEDESSKTPHS.

At 1 to 103 the chain is on the lumenal side; the sequence is MVSALEVKSI…QLISWSFAQG (103 aa). Residues 104 to 124 traverse the membrane as a helical segment; it reads LIIGQLSVVIFLIFFVKFFIF. Over 125–431 the chain is Cytoplasmic; sequence TDASSKMDNP…EDESSKTPHS (307 aa). The SMP-LTD domain maps to 192 to 404; it reads SAESLDWFNV…EPRFQSVKLP (213 aa). The segment at 412–431 is disordered; that stretch reads NTREEVIHKTEDESSKTPHS.

This sequence belongs to the MMM1 family. Homodimer. Component of the ER-mitochondria encounter structure (ERMES) or MDM complex, composed of MMM1, MDM10, MDM12 and MDM34. An MMM1 homodimer associates with one molecule of MDM12 on each side in a pairwise head-to-tail manner, and the SMP-LTD domains of MMM1 and MDM12 generate a continuous hydrophobic tunnel for phospholipid trafficking.

It is found in the endoplasmic reticulum membrane. Component of the ERMES/MDM complex, which serves as a molecular tether to connect the endoplasmic reticulum (ER) and mitochondria. Components of this complex are involved in the control of mitochondrial shape and protein biogenesis, and function in nonvesicular lipid trafficking between the ER and mitochondria. The MDM12-MMM1 subcomplex functions in the major beta-barrel assembly pathway that is responsible for biogenesis of all outer membrane beta-barrel proteins, and acts in a late step after the SAM complex. The MDM10-MDM12-MMM1 subcomplex further acts in the TOM40-specific pathway after the action of the MDM12-MMM1 complex. Essential for establishing and maintaining the structure of mitochondria and maintenance of mtDNA nucleoids. This Candida glabrata (strain ATCC 2001 / BCRC 20586 / JCM 3761 / NBRC 0622 / NRRL Y-65 / CBS 138) (Yeast) protein is Maintenance of mitochondrial morphology protein 1.